A 303-amino-acid polypeptide reads, in one-letter code: N-acetyl-D-glucosamine kinase (303 aa).

ATP contacts are provided by residues Gly-4–Lys-11 and Gly-133–Phe-140. Residues His-157, Cys-177, Cys-179, and Cys-184 each coordinate Zn(2+).

Belongs to the ROK (NagC/XylR) family. NagK subfamily.

It catalyses the reaction N-acetyl-D-glucosamine + ATP = N-acetyl-D-glucosamine 6-phosphate + ADP + H(+). Its pathway is cell wall biogenesis; peptidoglycan recycling. Functionally, catalyzes the phosphorylation of N-acetyl-D-glucosamine (GlcNAc) derived from cell-wall degradation, yielding GlcNAc-6-P. The polypeptide is N-acetyl-D-glucosamine kinase (Escherichia coli O7:K1 (strain IAI39 / ExPEC)).